We begin with the raw amino-acid sequence, 782 residues long: Semaphorin-3G (782 aa).

An N-terminal signal peptide occupies residues 1–22 (MAPSAWAICWLLGGLLLHGGSS). Positions 32–519 (RLRLSYRDLL…SRLGVAQLRL (488 aa)) constitute a Sema domain. A glycan (N-linked (GlcNAc...) asparagine) is linked at asparagine 44. Cysteine 105 and cysteine 116 are oxidised to a cystine. The N-linked (GlcNAc...) asparagine glycan is linked to asparagine 127. 5 disulfide bridges follow: cysteine 134–cysteine 143, cysteine 270–cysteine 382, cysteine 294–cysteine 342, cysteine 522–cysteine 540, and cysteine 603–cysteine 655. Positions 569–671 (PALQCLGQSQ…FSQTVVRLAL (103 aa)) constitute an Ig-like C2-type domain.

It belongs to the semaphorin family.

It localises to the secreted. Its function is as follows. Has chemorepulsive activities for sympathetic axons. Ligand of NRP2. This Homo sapiens (Human) protein is Semaphorin-3G (SEMA3G).